The following is a 222-amino-acid chain: E3 ubiquitin-protein ligase RNF138 (222 aa).

The RING-type zinc finger occupies 17–57; sequence CPVCQEILQTPVRTQTCRHVFCRKCFMLAMKSGGAYCPLCR. Zn(2+)-binding residues include Cys-85, Cys-88, His-100, and Cys-104. The C2HC RNF-type zinc finger occupies 85-104; that stretch reads CMYCGKMMKLHYMKLHYKSC. C2H2-type zinc fingers lie at residues 134-157 and 164-192; these read YKCPLCSEHNLNQRSLLEHCNNVH and MVCPICATLPWGDPIQTTGNVIAHLNARH. Residues 202–220 enclose the UIM domain; that stretch reads INIDEEAQFQIAVANSYKI.

Interacts with nlk.2 (via C-terminus) and ube2k. Auto-ubiquitinated.

The protein localises to the chromosome. It carries out the reaction S-ubiquitinyl-[E2 ubiquitin-conjugating enzyme]-L-cysteine + [acceptor protein]-L-lysine = [E2 ubiquitin-conjugating enzyme]-L-cysteine + N(6)-ubiquitinyl-[acceptor protein]-L-lysine.. The protein operates within protein modification; protein ubiquitination. E3 ubiquitin-protein ligase involved in DNA damage response by promoting DNA resection and homologous recombination. Recruited to sites of double-strand breaks following DNA damage and specifically promotes double-strand break repair via homologous recombination. Together with nlk.2, involved in the ubiquitination and degradation of TCF/LEF. Also exhibits auto-ubiquitination activity in combination with ube2k. May act as a negative regulator in the Wnt/beta-catenin-mediated signaling pathway. The chain is E3 ubiquitin-protein ligase RNF138 (rnf138) from Xenopus laevis (African clawed frog).